The following is a 425-amino-acid chain: MVVHWTIVDEIRLLRWASEFKPAGIHKHFHMFCIVERMNSPDKYPVTLLQKETMKLGKVFTAKDIWDKLSQSYNLEKIDEMENTYSLEATTESSRNGNGNGDDAEIHEETLLELNNRIRVRKQDFTLPWEEYGELILENARKSPNSNEEYPRVEDMNEKDSTIPKESPSTDLKNDNNKQEKNATIKVKELPEYHTEENDSPIDVQKEPIKEVQSDEKELQREHMSEEEQKMKSTNKTAAPVRKSQRLKRSKEVKFEDEEKEEIEEDNTKDEEQKEKKEEIQEPKITHNEEVDKEKNENEEGDDEREKSTSYENTNGSESEGVDEGVDEELGYESEREAEGKGKQIESEGGNLKKKTENKKGDDQQDDTKKDSKDKNEPLAKRTRHSSSTGNTSNETSPKRKRRKAGSRKNSPPATRVSSRLRNKK.

Residues 143-425 (SPNSNEEYPR…RVSSRLRNKK (283 aa)) are disordered. Basic and acidic residues-rich tracts occupy residues 149–163 (EYPR…DSTI) and 172–197 (LKND…HTEE). 2 positions are modified to phosphoserine: Ser200 and Ser225. Residues 204 to 231 (VQKEPIKEVQSDEKELQREHMSEEEQKM) show a composition bias toward basic and acidic residues. A coiled-coil region spans residues 209–310 (IKEVQSDEKE…GDDEREKSTS (102 aa)). Residues 255-269 (FEDEEKEEIEEDNTK) show a composition bias toward acidic residues. Residues 270 to 309 (DEEQKEKKEEIQEPKITHNEEVDKEKNENEEGDDEREKST) show a composition bias toward basic and acidic residues. Residues 320 to 332 (EGVDEGVDEELGY) are compositionally biased toward acidic residues. 2 stretches are compositionally biased toward basic and acidic residues: residues 333–346 (ESER…KQIE) and 354–380 (KKTE…EPLA). The segment covering 386-396 (SSSTGNTSNET) has biased composition (low complexity). Positions 408–418 (RKNSPPATRVS) are enriched in polar residues.

It belongs to the EAF7 family. Component of the NuA4 histone acetyltransferase complex composed of at least ACT1, ARP4, YAF9, VID21, SWC4, EAF3, EAF5, EAF6, EAF7, EPL1, ESA1, TRA1 and YNG2.

It is found in the nucleus. Functionally, component of the NuA4 histone acetyltransferase complex which is involved in transcriptional activation of selected genes principally by acetylation of nucleosomal histone H4 and H2A. The NuA4 complex is also involved in DNA repair. This is Chromatin modification-related protein EAF7 (EAF7) from Saccharomyces cerevisiae (strain ATCC 204508 / S288c) (Baker's yeast).